We begin with the raw amino-acid sequence, 195 residues long: MAKSSRATLALLIYGILMRYSQCTPIGMGFPNMRLDNDVFGDEGNSLSELSYEPDTMSARSRPALPEDAYTLYYPPERRAETHADGLLDRALRDILVQLSARKYLHSLTAVRVGEEEEDEEDSEPLSKRHSDGIFTDSYSRYRKQMAVKKYLAAVLGRRYRQRFRNKGRRLVVPSVWTGIRDTVIITPEKRGKRY.

An N-terminal signal peptide occupies residues 1 to 20; that stretch reads MAKSSRATLALLIYGILMRY. Positions 21 to 82 are excised as a propeptide; that stretch reads SQCTPIGMGF…YYPPERRAET (62 aa). Residues 113-132 form a disordered region; it reads VGEEEEDEEDSEPLSKRHSD. Residues 115 to 124 are compositionally biased toward acidic residues; that stretch reads EEEEDEEDSE. K167 is subject to Lysine amide. Positions 171-195 are excised as a propeptide; the sequence is LVVPSVWTGIRDTVIITPEKRGKRY.

This sequence belongs to the glucagon family. Brain, testis, ovary and stomach. Not pancreas, pituitary, muscle and liver.

It is found in the secreted. Functionally, primary role of GHRH is to release GH from the pituitary. PACAP plays pivotal roles as a neurotransmitter and/or a neuromodulator. This is Glucagon family neuropeptides from Clarias macrocephalus (Bighead catfish).